A 731-amino-acid polypeptide reads, in one-letter code: MFRVFGSFGSKGNQSSGEEQSTKTKQVLKQANDFEIALKAMDFVLDDRTDEGLNLLKKAEMETGSDQTILTLARGVIEFLQATLSFETEEMKRAAITLGKAEQMSWKSKQNAEKTNFRSSSIYPPGTVYAVTYTESCLLHALLMLFSESMMEAAKALLKLRRAYTMLQDIMVTVKKAERSKNSSSPSPSEKSQESCGSFVSAETTFISVDIPYKLSSEDKSNPLLLEFAEKIYTMRMGRLSGAHIGNTPSFHRLRDDLGLQTTPSQASDRHSVSDDFDLEQATIDEFIHSGANLCYGILQVVLSLLPPAIGAVLSIVGFKGSREEGLRLVWKATKERNVHGCIGLLGLMFYYDGPFQFTDADFDIPPNDNGSRALNKSRTNDSSLLPGYMDSATLLHPGKILEDALLKARALFPNSALWLLNEAKMLAGKGRLRDSLALMDSIDVNSIRMRQVKSLMVFERAILLVNLHEYNRAADDLISLLDISDWSHALYTYFAGCCYLENWRMTQLGLLNDGKEQFYKERARELIFDAPSLLGKKTFKSKNLPLDRFMLRKVQQFNNMQKKLNLQEPLDSIATSPVHELAYFYNGYNRMTENDLILTKKMLTEYHNPAIDSEDPDQELIRNLLLSLTLRRLGDAERGLALLDDIVLPKIFYIQNGKVKYFKKTEDPWAYPAALYERALFCWKLGGMESLNECREWLLRAQNYAADYELSTRIGMKIKAALDRVENALA.

The tract at residues 1–26 (MFRVFGSFGSKGNQSSGEEQSTKTKQ) is disordered. Residues 10 to 26 (SKGNQSSGEEQSTKTKQ) show a composition bias toward polar residues. Phosphoserine is present on residues Ser265, Ser268, and Ser378. At Thr380 the chain carries Phosphothreonine. Residues Ser383 and Ser392 each carry the phosphoserine modification.

It belongs to the IML2 family. In terms of assembly, interacts with lipid droplet proteins PET10 and PDR16.

It localises to the cytoplasm. The protein resides in the nucleus. Its function is as follows. Inclusion body (IB) resident protein that interacts strongly with lipid droplet (LD) proteins. Involved in LD-mediated IB clearing after protein folding stress, probably by enabling access to the IBs of an LD-stored soluble sterol derivative that acts as a chaperone in inclusion clearing. The polypeptide is Inclusion body clearance protein IML2 (Saccharomyces cerevisiae (strain ATCC 204508 / S288c) (Baker's yeast)).